The chain runs to 84 residues: Delta-stichotoxin-Sgt3a (84 aa).

The first 19 residues, 1-19, serve as a signal peptide directing secretion; it reads MAYLKIVLVALMLVVAVSA. A propeptide spanning residues 20-33 is cleaved from the precursor; sequence MRLSDQEDQDISVA. Disulfide bonds link Cys38/Cys78, Cys40/Cys68, and Cys61/Cys79. A propeptide is located at residue Gly84.

The protein belongs to the sea anemone sodium channel inhibitory toxin family. Type II subfamily.

It is found in the secreted. The protein localises to the nematocyst. Functionally, binds specifically to voltage-gated sodium channels (Nav), thereby delaying their inactivation during signal transduction. This Stichodactyla gigantea (Giant carpet anemone) protein is Delta-stichotoxin-Sgt3a.